A 116-amino-acid chain; its full sequence is Holo-[acyl-carrier-protein] synthase (116 aa).

Mg(2+)-binding residues include aspartate 8 and glutamate 59.

Belongs to the P-Pant transferase superfamily. AcpS family. Mg(2+) is required as a cofactor.

It localises to the cytoplasm. The catalysed reaction is apo-[ACP] + CoA = holo-[ACP] + adenosine 3',5'-bisphosphate + H(+). Functionally, transfers the 4'-phosphopantetheine moiety from coenzyme A to a Ser of acyl-carrier-protein. This Staphylococcus saprophyticus subsp. saprophyticus (strain ATCC 15305 / DSM 20229 / NCIMB 8711 / NCTC 7292 / S-41) protein is Holo-[acyl-carrier-protein] synthase.